Reading from the N-terminus, the 85-residue chain is Large ribosomal subunit protein bL31B (85 aa).

It belongs to the bacterial ribosomal protein bL31 family. Type B subfamily. Part of the 50S ribosomal subunit.

The polypeptide is Large ribosomal subunit protein bL31B (Kocuria rhizophila (strain ATCC 9341 / DSM 348 / NBRC 103217 / DC2201)).